The sequence spans 300 residues: Porphobilinogen deaminase (300 aa).

The residue at position 242 (Cys-242) is an S-(dipyrrolylmethanemethyl)cysteine.

It belongs to the HMBS family. In terms of assembly, monomer. Dipyrromethane serves as cofactor.

The catalysed reaction is 4 porphobilinogen + H2O = hydroxymethylbilane + 4 NH4(+). It participates in porphyrin-containing compound metabolism; protoporphyrin-IX biosynthesis; coproporphyrinogen-III from 5-aminolevulinate: step 2/4. Functionally, tetrapolymerization of the monopyrrole PBG into the hydroxymethylbilane pre-uroporphyrinogen in several discrete steps. This is Porphobilinogen deaminase from Blochmanniella pennsylvanica (strain BPEN).